The chain runs to 395 residues: MKLQGAGCVVAAVLGALFIVNVESHFHKPELQLCKAFGEPCISYDVRSTIGPRCWFKLEFPREKCCNENGKRQSPIDIPDVKSIYKVPQKLRYSSRKFVGHLENTGIQPAFKRKVGADKVYLEGIGSPVGKRYFIENVHFHVGVRHKERQTENTLNGRSFDGEAHIVHIREDFGDLKEAANHPQGLLVISIFLSTSKGERRRDGFDDLIEMIQDVQEFEEEDGPCANVKIPDIFKFKQLIPFHPVWPICKKTFPVADDSDNSGSGVVCNFYLPNGLCGEKKESKINPNELLADDPEYYVFNGGLTTPPCSESVLWLVAKQPRKVSVFYPYVVRNMETQREGEIIGDFGNLRPLQDLNDRPVFLVRFRLKRNWEHGDTAANDNDAMDSPFSVLGIN.

An N-terminal signal peptide occupies residues 1-24; it reads MKLQGAGCVVAAVLGALFIVNVES. Residues 42 to 365 form the Alpha-carbonic anhydrase domain; the sequence is ISYDVRSTIG…LNDRPVFLVR (324 aa). The Zn(2+) site is built by histidine 139, histidine 141, and histidine 165.

The protein belongs to the alpha-carbonic anhydrase family. Zn(2+) serves as cofactor. As to expression, component of the acid-insoluble and acid-soluble organic matrix of calcified layers of the shell (at protein level).

It localises to the secreted. The enzyme catalyses hydrogencarbonate + H(+) = CO2 + H2O. In terms of biological role, reversible hydration of carbon dioxide. The protein is Putative carbonic anhydrase 1 of Lottia gigantea (Giant owl limpet).